A 189-amino-acid chain; its full sequence is Probable nicotinate-nucleotide adenylyltransferase (189 aa).

This sequence belongs to the NadD family.

The catalysed reaction is nicotinate beta-D-ribonucleotide + ATP + H(+) = deamido-NAD(+) + diphosphate. The protein operates within cofactor biosynthesis; NAD(+) biosynthesis; deamido-NAD(+) from nicotinate D-ribonucleotide: step 1/1. Functionally, catalyzes the reversible adenylation of nicotinate mononucleotide (NaMN) to nicotinic acid adenine dinucleotide (NaAD). This Exiguobacterium sibiricum (strain DSM 17290 / CCUG 55495 / CIP 109462 / JCM 13490 / 255-15) protein is Probable nicotinate-nucleotide adenylyltransferase.